Here is a 411-residue protein sequence, read N- to C-terminus: 2,3-bisphosphoglycerate-independent phosphoglycerate mutase (411 aa).

The interval 164 to 190 (VSSNDPKKEGVQPLTIRPGSDDPADAK) is disordered.

This sequence belongs to the BPG-independent phosphoglycerate mutase family. A-PGAM subfamily.

The enzyme catalyses (2R)-2-phosphoglycerate = (2R)-3-phosphoglycerate. It participates in carbohydrate degradation; glycolysis; pyruvate from D-glyceraldehyde 3-phosphate: step 3/5. Functionally, catalyzes the interconversion of 2-phosphoglycerate and 3-phosphoglycerate. The protein is 2,3-bisphosphoglycerate-independent phosphoglycerate mutase of Methanoculleus marisnigri (strain ATCC 35101 / DSM 1498 / JR1).